Consider the following 383-residue polypeptide: Succinyl-diaminopimelate desuccinylase (383 aa).

His-79 contacts Zn(2+). Asp-81 is a catalytic residue. A Zn(2+)-binding site is contributed by Asp-110. Glu-141 (proton acceptor) is an active-site residue. Residues Glu-142, Glu-170, and His-355 each contribute to the Zn(2+) site.

Belongs to the peptidase M20A family. DapE subfamily. As to quaternary structure, homodimer. The cofactor is Zn(2+). Co(2+) serves as cofactor.

It carries out the reaction N-succinyl-(2S,6S)-2,6-diaminopimelate + H2O = (2S,6S)-2,6-diaminopimelate + succinate. It participates in amino-acid biosynthesis; L-lysine biosynthesis via DAP pathway; LL-2,6-diaminopimelate from (S)-tetrahydrodipicolinate (succinylase route): step 3/3. In terms of biological role, catalyzes the hydrolysis of N-succinyl-L,L-diaminopimelic acid (SDAP), forming succinate and LL-2,6-diaminopimelate (DAP), an intermediate involved in the bacterial biosynthesis of lysine and meso-diaminopimelic acid, an essential component of bacterial cell walls. The polypeptide is Succinyl-diaminopimelate desuccinylase (Helicobacter pylori (strain ATCC 700392 / 26695) (Campylobacter pylori)).